The primary structure comprises 233 residues: C-type lectin domain family 2 member D2 (233 aa).

The tract at residues 1–34 is disordered; it reads MPSSAHLQDAPPLLSRTLTQDEEQTSLRQSSSCG. The Cytoplasmic portion of the chain corresponds to 1 to 76; that stretch reads MPSSAHLQDA…SPESPAKLPC (76 aa). The chain crosses the membrane as a helical; Signal-anchor for type II membrane protein span at residues 77–97; it reads CYGVIMVLSVAVVALSVALSV. Residues 98–233 lie on the Extracellular side of the membrane; the sequence is KKTPQILTVK…KPNSYTSQCQ (136 aa). The C-type lectin domain maps to 119–228; the sequence is VGNKCYYFNE…KSICSKPNSY (110 aa). Asparagine 132 is a glycosylation site (N-linked (GlcNAc...) asparagine).

It localises to the cell membrane. In terms of biological role, lectin-type cell surface receptor. This is C-type lectin domain family 2 member D2 (Clec2d2) from Rattus norvegicus (Rat).